The chain runs to 445 residues: Tubulin beta-1 chain (445 aa).

Positions 1-4 (MREI) match the MREI motif motif. The GTP site is built by Gln11, Glu69, Ser138, Gly142, Thr143, Gly144, Asn204, and Asn226. Residue Glu69 participates in Mg(2+) binding. The tract at residues 425-445 (YQDATAEEEGEFEEEGEEELA) is disordered. Over residues 429–445 (TAEEEGEFEEEGEEELA) the composition is skewed to acidic residues. Glu438 carries the post-translational modification 5-glutamyl polyglutamate.

The protein belongs to the tubulin family. As to quaternary structure, dimer of alpha and beta chains. A typical microtubule is a hollow water-filled tube with an outer diameter of 25 nm and an inner diameter of 15 nM. Alpha-beta heterodimers associate head-to-tail to form protofilaments running lengthwise along the microtubule wall with the beta-tubulin subunit facing the microtubule plus end conferring a structural polarity. Microtubules usually have 13 protofilaments but different protofilament numbers can be found in some organisms and specialized cells. The cofactor is Mg(2+). In terms of processing, some glutamate residues at the C-terminus are polyglycylated, resulting in polyglycine chains on the gamma-carboxyl group. Glycylation is mainly limited to tubulin incorporated into axonemes (cilia and flagella) whereas glutamylation is prevalent in neuronal cells, centrioles, axonemes, and the mitotic spindle. Both modifications can coexist on the same protein on adjacent residues, and lowering polyglycylation levels increases polyglutamylation, and reciprocally. The precise function of polyglycylation is still unclear. Some glutamate residues at the C-terminus are polyglutamylated, resulting in polyglutamate chains on the gamma-carboxyl group. Polyglutamylation plays a key role in microtubule severing by spastin (SPAST). SPAST preferentially recognizes and acts on microtubules decorated with short polyglutamate tails: severing activity by SPAST increases as the number of glutamates per tubulin rises from one to eight, but decreases beyond this glutamylation threshold.

The protein resides in the cytoplasm. The protein localises to the cytoskeleton. Its function is as follows. Tubulin is the major constituent of microtubules, a cylinder consisting of laterally associated linear protofilaments composed of alpha- and beta-tubulin heterodimers. Microtubules grow by the addition of GTP-tubulin dimers to the microtubule end, where a stabilizing cap forms. Below the cap, tubulin dimers are in GDP-bound state, owing to GTPase activity of alpha-tubulin. The sequence is that of Tubulin beta-1 chain from Gadus morhua (Atlantic cod).